Here is a 1158-residue protein sequence, read N- to C-terminus: ATP-dependent helicase/deoxyribonuclease subunit B (1158 aa).

ATP is bound at residue 8 to 15; that stretch reads GRAGTGKS. Positions 791, 1112, 1115, and 1121 each coordinate [4Fe-4S] cluster.

This sequence belongs to the helicase family. AddB/RexB type 1 subfamily. In terms of assembly, heterodimer of AddA and AddB. Mg(2+) serves as cofactor. The cofactor is [4Fe-4S] cluster.

Its function is as follows. The heterodimer acts as both an ATP-dependent DNA helicase and an ATP-dependent, dual-direction single-stranded exonuclease. Recognizes the chi site generating a DNA molecule suitable for the initiation of homologous recombination. The AddB subunit has 5' -&gt; 3' nuclease activity but not helicase activity. The chain is ATP-dependent helicase/deoxyribonuclease subunit B from Clostridium perfringens (strain 13 / Type A).